A 492-amino-acid polypeptide reads, in one-letter code: Protein nucleotidyltransferase YdiU (492 aa).

Gly91, Gly93, Arg94, Lys114, Asp126, Gly127, Arg177, and Arg184 together coordinate ATP. The active-site Proton acceptor is Asp253. Positions 254 and 263 each coordinate Mg(2+). Asp263 is an ATP binding site.

Belongs to the SELO family. Requires Mg(2+) as cofactor. Mn(2+) serves as cofactor.

The enzyme catalyses L-seryl-[protein] + ATP = 3-O-(5'-adenylyl)-L-seryl-[protein] + diphosphate. The catalysed reaction is L-threonyl-[protein] + ATP = 3-O-(5'-adenylyl)-L-threonyl-[protein] + diphosphate. It carries out the reaction L-tyrosyl-[protein] + ATP = O-(5'-adenylyl)-L-tyrosyl-[protein] + diphosphate. It catalyses the reaction L-histidyl-[protein] + UTP = N(tele)-(5'-uridylyl)-L-histidyl-[protein] + diphosphate. The enzyme catalyses L-seryl-[protein] + UTP = O-(5'-uridylyl)-L-seryl-[protein] + diphosphate. The catalysed reaction is L-tyrosyl-[protein] + UTP = O-(5'-uridylyl)-L-tyrosyl-[protein] + diphosphate. In terms of biological role, nucleotidyltransferase involved in the post-translational modification of proteins. It can catalyze the addition of adenosine monophosphate (AMP) or uridine monophosphate (UMP) to a protein, resulting in modifications known as AMPylation and UMPylation. This chain is Protein nucleotidyltransferase YdiU, found in Maridesulfovibrio salexigens (strain ATCC 14822 / DSM 2638 / NCIMB 8403 / VKM B-1763) (Desulfovibrio salexigens).